The chain runs to 209 residues: Imidazole glycerol phosphate synthase subunit HisH (209 aa).

A Glutamine amidotransferase type-1 domain is found at 1–205 (MIAIIDYGMG…KGVVETWKSS (205 aa)). C79 functions as the Nucleophile in the catalytic mechanism. Residues H180 and E182 contribute to the active site.

As to quaternary structure, heterodimer of HisH and HisF.

The protein localises to the cytoplasm. The catalysed reaction is 5-[(5-phospho-1-deoxy-D-ribulos-1-ylimino)methylamino]-1-(5-phospho-beta-D-ribosyl)imidazole-4-carboxamide + L-glutamine = D-erythro-1-(imidazol-4-yl)glycerol 3-phosphate + 5-amino-1-(5-phospho-beta-D-ribosyl)imidazole-4-carboxamide + L-glutamate + H(+). The enzyme catalyses L-glutamine + H2O = L-glutamate + NH4(+). It functions in the pathway amino-acid biosynthesis; L-histidine biosynthesis; L-histidine from 5-phospho-alpha-D-ribose 1-diphosphate: step 5/9. Its function is as follows. IGPS catalyzes the conversion of PRFAR and glutamine to IGP, AICAR and glutamate. The HisH subunit catalyzes the hydrolysis of glutamine to glutamate and ammonia as part of the synthesis of IGP and AICAR. The resulting ammonia molecule is channeled to the active site of HisF. The chain is Imidazole glycerol phosphate synthase subunit HisH from Bacillus anthracis (strain A0248).